The primary structure comprises 428 residues: Serine--tRNA ligase (428 aa).

L-serine is bound at residue 231–233; that stretch reads TAE. Residues 262–264 and valine 278 contribute to the ATP site; that span reads RRE. Glutamate 285 contacts L-serine. 349–352 is a binding site for ATP; it reads EVSS. Serine 384 is a binding site for L-serine.

This sequence belongs to the class-II aminoacyl-tRNA synthetase family. Type-1 seryl-tRNA synthetase subfamily. As to quaternary structure, homodimer. The tRNA molecule binds across the dimer.

It is found in the cytoplasm. It carries out the reaction tRNA(Ser) + L-serine + ATP = L-seryl-tRNA(Ser) + AMP + diphosphate + H(+). The enzyme catalyses tRNA(Sec) + L-serine + ATP = L-seryl-tRNA(Sec) + AMP + diphosphate + H(+). The protein operates within aminoacyl-tRNA biosynthesis; selenocysteinyl-tRNA(Sec) biosynthesis; L-seryl-tRNA(Sec) from L-serine and tRNA(Sec): step 1/1. Its function is as follows. Catalyzes the attachment of serine to tRNA(Ser). Is also able to aminoacylate tRNA(Sec) with serine, to form the misacylated tRNA L-seryl-tRNA(Sec), which will be further converted into selenocysteinyl-tRNA(Sec). This Chlamydia trachomatis serovar L2 (strain ATCC VR-902B / DSM 19102 / 434/Bu) protein is Serine--tRNA ligase.